The following is a 126-amino-acid chain: Small ribosomal subunit protein uS13 (126 aa).

Residues 99–126 (LRGQSTKNNARTRKGKKKTVANKKKATK) form a disordered region. Positions 108 to 126 (ARTRKGKKKTVANKKKATK) are enriched in basic residues.

It belongs to the universal ribosomal protein uS13 family. As to quaternary structure, part of the 30S ribosomal subunit. Forms a loose heterodimer with protein S19. Forms two bridges to the 50S subunit in the 70S ribosome.

Functionally, located at the top of the head of the 30S subunit, it contacts several helices of the 16S rRNA. In the 70S ribosome it contacts the 23S rRNA (bridge B1a) and protein L5 of the 50S subunit (bridge B1b), connecting the 2 subunits; these bridges are implicated in subunit movement. Contacts the tRNAs in the A and P-sites. The chain is Small ribosomal subunit protein uS13 from Porphyromonas gingivalis (strain ATCC 33277 / DSM 20709 / CIP 103683 / JCM 12257 / NCTC 11834 / 2561).